Reading from the N-terminus, the 108-residue chain is Nucleoid-associated protein BARBAKC583_1239 (108 aa).

This sequence belongs to the YbaB/EbfC family. Homodimer.

Its subcellular location is the cytoplasm. It localises to the nucleoid. Binds to DNA and alters its conformation. May be involved in regulation of gene expression, nucleoid organization and DNA protection. This chain is Nucleoid-associated protein BARBAKC583_1239, found in Bartonella bacilliformis (strain ATCC 35685 / KC583 / Herrer 020/F12,63).